The chain runs to 427 residues: Serine--tRNA ligase (427 aa).

L-serine is bound at residue 235 to 237; that stretch reads TAE. Residues 266–268 and Val-282 contribute to the ATP site; that span reads RRE. Glu-289 is a binding site for L-serine. Residue 353-356 participates in ATP binding; that stretch reads EASS. Ser-389 provides a ligand contact to L-serine.

The protein belongs to the class-II aminoacyl-tRNA synthetase family. Type-1 seryl-tRNA synthetase subfamily. Homodimer. The tRNA molecule binds across the dimer.

Its subcellular location is the cytoplasm. It carries out the reaction tRNA(Ser) + L-serine + ATP = L-seryl-tRNA(Ser) + AMP + diphosphate + H(+). The catalysed reaction is tRNA(Sec) + L-serine + ATP = L-seryl-tRNA(Sec) + AMP + diphosphate + H(+). Its pathway is aminoacyl-tRNA biosynthesis; selenocysteinyl-tRNA(Sec) biosynthesis; L-seryl-tRNA(Sec) from L-serine and tRNA(Sec): step 1/1. In terms of biological role, catalyzes the attachment of serine to tRNA(Ser). Is also able to aminoacylate tRNA(Sec) with serine, to form the misacylated tRNA L-seryl-tRNA(Sec), which will be further converted into selenocysteinyl-tRNA(Sec). The chain is Serine--tRNA ligase from Chlorobium phaeobacteroides (strain BS1).